Consider the following 299-residue polypeptide: MYYDVLKTFIAVVEEKNFTKAAEKLMISQPSVSLHIKNLEKEFQTALLNRSPKHFTTTPTGDILYQRAKQMVFLYEQAKAEIYAHHHYVKGELKIAASFTIGEYILPPLLAQLQKLYPELNLDVMIGNTEEVSERVRMLQADIGLIEGHTNENELEIEPFMEDEMCIAAPNQHPLAGRKEISISDLQNEAWVTREKGSGTREYLDHVLSSNGLRPKSMFTISSNQGVKEAVINGMGLSVLSRSVLRKDLIHREISILHINNFSLKRKLSYIHSPLMENTKNKEIFITMLKSNYQSQLLK.

An HTH lysR-type domain is found at 1-58 (MYYDVLKTFIAVVEEKNFTKAAEKLMISQPSVSLHIKNLEKEFQTALLNRSPKHFTTT). Residues 18–37 (FTKAAEKLMISQPSVSLHIK) constitute a DNA-binding region (H-T-H motif).

Belongs to the LysR transcriptional regulatory family.

Transcriptional activator of the cysJI operon which is involved in sulfur assimilation. Also negatively regulates its own transcription. The protein is HTH-type transcriptional regulator CysL (cysL) of Bacillus subtilis (strain 168).